The primary structure comprises 315 residues: Olfactory receptor 3A2 (315 aa).

The Extracellular segment spans residues 1–29 (MEPEAGTNRTAVAEFILLGLVQTEEMQPV). Asn8 carries an N-linked (GlcNAc...) asparagine glycan. A helical membrane pass occupies residues 30–52 (VFVLFLFAYLVTIGGNLSILAAI). At 53 to 60 (LVEPKLHA) the chain is on the cytoplasmic side. A helical transmembrane segment spans residues 61 to 82 (PMYFFLGNLSVLDVGCITVTVP). At 83–103 (AMLGRLLSHKSTISYDACLSQ) the chain is on the extracellular side. Cysteines 100 and 192 form a disulfide. A helical transmembrane segment spans residues 104-123 (LFFFHLLAGMDCFLLTAMAY). Residues 124-143 (DRFLAICWPLTYSTRMSQTV) are Cytoplasmic-facing. The helical transmembrane segment at 144 to 161 (QRMLVAASWACAFTNALT) threads the bilayer. Topologically, residues 162 to 199 (HTVAMSTLNFCGPNEVNHFYCDLPQLFQLSCSSTQLNE) are extracellular. A helical transmembrane segment spans residues 200 to 223 (LLLFAVGFIMAGTPLVLIITSYSH). Topologically, residues 224 to 240 (VAAAVLRIRSVEGWKKA) are cytoplasmic. A helical transmembrane segment spans residues 241-264 (FSTCGSHLTVVCLFFGTGIFNYMR). The Extracellular portion of the chain corresponds to 265 to 275 (LGSEEASDKDK). Residues 276-295 (GVGVFNTVINPMLNPLIYSL) traverse the membrane as a helical segment. The Cytoplasmic portion of the chain corresponds to 296–315 (RNPDVQGALWRIFLGRRSLT).

The protein belongs to the G-protein coupled receptor 1 family.

It localises to the cell membrane. In terms of biological role, odorant receptor. The chain is Olfactory receptor 3A2 (OR3A2) from Pan troglodytes (Chimpanzee).